Reading from the N-terminus, the 252-residue chain is Trans-aconitate 2-methyltransferase (252 aa).

Belongs to the methyltransferase superfamily. Tam family.

Its subcellular location is the cytoplasm. The enzyme catalyses trans-aconitate + S-adenosyl-L-methionine = (E)-3-(methoxycarbonyl)pent-2-enedioate + S-adenosyl-L-homocysteine. Functionally, catalyzes the S-adenosylmethionine monomethyl esterification of trans-aconitate. The protein is Trans-aconitate 2-methyltransferase of Escherichia coli O1:K1 / APEC.